An 860-amino-acid chain; its full sequence is Transforming growth factor-beta receptor-associated protein 1 (860 aa).

Residues 24–297 (HISIECVECC…HILQDFEGRV (274 aa)) enclose the CNH domain. One copy of the CHCR repeat lies at 564-732 (RPLDEQQQTS…YLRAGPSAQD (169 aa)).

The protein belongs to the TRAP1 family. As to quaternary structure, interacts with TGFBR2 and ACVR2B; in the absence of ligand stimulation. Interacts with TGFBR1, ACVRL1, BMPR1A and ACVR1B; in the absence of ligand stimulation and to a less extent. Interacts with SMAD4; the interaction seems to be mutually exclusive with the interaction of SMAD4 and phosphorylated SMAD2. May interact with ALOX5. Interacts with RAB5C. Interacts with VPS8, VPS11 and VPS16. Component of the putative class C core vacuole/endosome tethering (CORVET) complex; the core of which composed of the class C Vps proteins VPS11, VPS16, VPS18 and VPS33A, is associated with VPS8 and TGFBRAP1.

The protein localises to the cytoplasm. It localises to the early endosome. Functionally, plays a role in the TGF-beta/activin signaling pathway. It associates with inactive heteromeric TGF-beta and activin receptor complexes, mainly through the type II receptor, and is released upon activation of signaling. May recruit SMAD4 to the vicinity of the receptor complex and facilitate its interaction with receptor-regulated Smads, such as SMAD2. In terms of biological role, plays a role in vesicle-mediated protein trafficking of the endocytic membrane transport pathway. Believed to act as a component of the putative CORVET endosomal tethering complexes which is proposed to be involved in the Rab5-to-Rab7 endosome conversion probably implicating MON1A/B, and via binding SNAREs and SNARE complexes to mediate tethering and docking events during SNARE-mediated membrane fusion. The CORVET complex is proposed to function as a Rab5 effector to mediate early endosome fusion probably in specific endosome subpopulations. Functions predominantly in APPL1-containing endosomes and in degradative but not recycling trafficking of endocytosed cargo. The chain is Transforming growth factor-beta receptor-associated protein 1 (Tgfbrap1) from Mus musculus (Mouse).